The chain runs to 366 residues: Short-chain collagen C4 (366 aa).

Over residues Asp-1–Pro-14 the composition is skewed to low complexity. 2 triple-helical region regions span residues Asp-1 to Lys-23 and Gly-40 to Val-210. A disordered region spans residues Asp-1–Asn-207. Pro residues predominate over residues Tyr-28 to Pro-45. Low complexity-rich tracts occupy residues Pro-75–Asp-90 and Thr-99–Asp-110. Residues Asp-138–Asp-149 show a composition bias toward basic and acidic residues. 2 stretches are compositionally biased toward low complexity: residues Gln-150–Ala-168 and Gln-189–Gln-201.

It localises to the secreted. The protein resides in the extracellular space. The protein localises to the extracellular matrix. This Ephydatia muelleri (Mueller's freshwater sponge) protein is Short-chain collagen C4.